The chain runs to 39 residues: Potassium channel toxin alpha-KTx 2.16 (39 aa).

3 disulfide bridges follow: Cys-7–Cys-29, Cys-13–Cys-34, and Cys-17–Cys-36. At Ile-39 the chain carries Isoleucine amide.

It belongs to the short scorpion toxin superfamily. Potassium channel inhibitor family. Alpha-KTx 02 subfamily. In terms of tissue distribution, expressed by the venom gland.

The protein localises to the secreted. In terms of biological role, blocks human voltage-gated potassium channels Kv1.2/KCNA2 (IC(50)=0.7 nM), Kv1.3/KCNA3 (IC(50)=26.2 nM) and blocks intermediate conductance calcium-activated potassium channel KCa3.1/KCNN4 (IC(50)=56 nM). The chain is Potassium channel toxin alpha-KTx 2.16 from Centruroides tecomanus (Scorpion).